The primary structure comprises 503 residues: Probable cytosol aminopeptidase (503 aa).

Mn(2+) is bound by residues K268 and D273. K280 is an active-site residue. Residues D291, D350, and E352 each coordinate Mn(2+). R354 is a catalytic residue.

This sequence belongs to the peptidase M17 family. Requires Mn(2+) as cofactor.

It localises to the cytoplasm. It catalyses the reaction Release of an N-terminal amino acid, Xaa-|-Yaa-, in which Xaa is preferably Leu, but may be other amino acids including Pro although not Arg or Lys, and Yaa may be Pro. Amino acid amides and methyl esters are also readily hydrolyzed, but rates on arylamides are exceedingly low.. The enzyme catalyses Release of an N-terminal amino acid, preferentially leucine, but not glutamic or aspartic acids.. Functionally, presumably involved in the processing and regular turnover of intracellular proteins. Catalyzes the removal of unsubstituted N-terminal amino acids from various peptides. In Corynebacterium efficiens (strain DSM 44549 / YS-314 / AJ 12310 / JCM 11189 / NBRC 100395), this protein is Probable cytosol aminopeptidase.